Consider the following 122-residue polypeptide: Large ribosomal subunit protein uL22 (122 aa).

It belongs to the universal ribosomal protein uL22 family. Part of the 50S ribosomal subunit.

Its function is as follows. This protein binds specifically to 23S rRNA; its binding is stimulated by other ribosomal proteins, e.g. L4, L17, and L20. It is important during the early stages of 50S assembly. It makes multiple contacts with different domains of the 23S rRNA in the assembled 50S subunit and ribosome. In terms of biological role, the globular domain of the protein is located near the polypeptide exit tunnel on the outside of the subunit, while an extended beta-hairpin is found that lines the wall of the exit tunnel in the center of the 70S ribosome. This Thermosynechococcus vestitus (strain NIES-2133 / IAM M-273 / BP-1) protein is Large ribosomal subunit protein uL22.